The following is a 1216-amino-acid chain: Metabotropic glycine receptor (1216 aa).

The N-terminal stretch at 1–23 (MGVMAYPFLFCLLLVHFGLGAIG) is a signal peptide. Residues 24 to 417 (ASREAPSRPD…CFVQEDKYLR (394 aa)) are Extracellular-facing. The segment at 25–65 (SREAPSRPDPPRERTLRAKQHAQQPARASASDPSAPWSRST) is disordered. Over residues 28 to 40 (APSRPDPPRERTL) the composition is skewed to basic and acidic residues. Residues 46–64 (AQQPARASASDPSAPWSRS) show a composition bias toward low complexity. The segment at 85 to 281 (YLYTGDSHKL…CENGSYKPGW (197 aa)) is cache-like region. N-linked (GlcNAc...) asparagine glycosylation is found at Asn-98 and Asn-143. The cysteines at positions 99 and 272 are disulfide-linked. Glycine is bound by residues Ser-172 and Arg-173. Asn-215 carries N-linked (GlcNAc...) asparagine glycosylation. Glu-271 is a binding site for glycine. An N-linked (GlcNAc...) asparagine glycan is attached at Asn-274. Asp-307 provides a ligand contact to glycine. The N-linked (GlcNAc...) asparagine glycan is linked to Asn-333. The chain crosses the membrane as a helical span at residues 418–439 (LAIISFQALCMLLDFLSMLVVY). The Cytoplasmic portion of the chain corresponds to 440–451 (RFRKAKSIRASG). A helical transmembrane segment spans residues 452–474 (LILLETILFGSLLLYFPVVILYF). At 475-478 (EPST) the chain is on the extracellular side. The chain crosses the membrane as a helical span at residues 479–501 (FRCILLRWVRLLGFATVYGTVTL). A disulfide bridge connects residues Cys-481 and Cys-573. At 502-525 (KLHRVLKVFLSRTAQRIPYMTGGR) the chain is on the cytoplasmic side. The chain crosses the membrane as a helical span at residues 526–547 (VMRMLAVILLVVFWFLVGWTSS). The Extracellular portion of the chain corresponds to 548 to 576 (VCQNLERHISLIGQGRTSDHLIFSMCLVE). Residues 577-597 (RWDYMTAAAEFLFLLWGVYLC) traverse the membrane as a helical segment. The Cytoplasmic segment spans residues 598–611 (YAVRTVPSAFHEPR). A helical transmembrane segment spans residues 612 to 633 (YMAVAVHNELIISAIFHTIRFV). At 634-642 (LASRLQSDW) the chain is on the extracellular side. The chain crosses the membrane as a helical span at residues 643 to 664 (MLMLYFAHTHLTVTVTIGLLLI). The Cytoplasmic portion of the chain corresponds to 665–1216 (PKFSHSSNNP…NEEVRLARKV (552 aa)). Residues Ser-694, Ser-705, and Ser-708 each carry the phosphoserine modification. Disordered stretches follow at residues 757 to 875 (RITE…ESVP) and 911 to 1000 (KEKT…HMKD). Residues 769 to 781 (CSKEDKDGGEHGS) are compositionally biased toward basic and acidic residues. Lys-774 participates in a covalent cross-link: Glycyl lysine isopeptide (Lys-Gly) (interchain with G-Cter in ubiquitin). A compositionally biased stretch (polar residues) spans 864-873 (EDSQAVSTES). Ser-866 bears the Phosphoserine mark. Basic and acidic residues predominate over residues 926–944 (VEERAKAQKALPRERETNR). 2 stretches are compositionally biased toward polar residues: residues 945–963 (KYSN…PNSS) and 980–991 (QRANPTTANSDL). Ser-947 is subject to Phosphoserine. A VCPWE motif 1 motif is present at residues 1007–1011 (VCPWE). The interval 1038–1072 (ERNPTFSLKEKSHPKPKAADLCQQSNPKSVDKAEV) is disordered. Residue Ser-1066 is modified to Phosphoserine. The VCPWE motif 2 signature appears at 1072-1076 (VCPWE). Residue Ser-1081 is modified to Phosphoserine. The tract at residues 1128–1167 (SKVENENLNQLGEQEKKTSSSERNVPDSHNSSNNFQPPLM) is disordered. The span at 1140-1153 (EQEKKTSSSERNVP) shows a compositional bias: basic and acidic residues. Positions 1154–1163 (DSHNSSNNFQ) are enriched in polar residues. A VCPWE motif 3 motif is present at residues 1172 to 1176 (VCPWE).

This sequence belongs to the G-protein coupled receptor 3 family. Homodimer. Associates with the RGS7-GNB5 complex, promoting its localization to the cell membrane and regulating its GTPase activator activity. Interacts (via VCPWE motifs) with GNAO1. Interacts with GPC4. Interacts with EGFLAM.

The protein localises to the cell membrane. The protein resides in the postsynaptic cell membrane. Its subcellular location is the presynaptic cell membrane. It localises to the nucleus. Functionally, metabotropic receptor for glycine that controls synapse formation and function in the brain. Acts as an atypical G-protein coupled receptor that recruits and regulates the RGS7-GNB5 complex instead of activating G proteins. In absence of glycine ligand, promotes the GTPase activator activity of RGS7, increasing the GTPase activity of G protein alpha subunits, thereby driving them into their inactive GDP-bound form. Glycine-binding changes the conformation of the intracellular surface, inhibiting the GTPase activator activity of the RGS7-GNB5 complex, promoting G protein alpha subunits into their active GTP-bound form and regulating cAMP levels. Also able to bind taurine, a compound closely related to glycine, but with a two-fold lower affinity. Glycine receptor-dependent regulation of cAMP controls key ion channels, kinases and neurotrophic factors involved in neuronal excitability and synaptic transmission. Plays a pivotal role in regulating mood and cognition via its ability to regulate neuronal excitability in L2/L3 pyramidal neurons of the prefrontal cortex. Also involved in spatial learning by regulating hippocampal CA1 neuronal excitability. Acts as a synaptic organizer in the hippocampus, required for proper mossy fiber-CA3 neurocircuitry establishment, structure and function: induces presynaptic differentiation in contacting axons via its interaction with GPC4. In addition to glycine, may also act as a receptor for osteocalcin (BGLAP) hormone: osteocalcin-binding initiates a signaling response that prevents neuronal apoptosis in the hippocampus and regulates the synthesis of neurotransmitters. The chain is Metabotropic glycine receptor (GPR158) from Bos taurus (Bovine).